The sequence spans 157 residues: 3-dehydroquinate dehydratase (157 aa).

The active-site Proton acceptor is the tyrosine 24. Asparagine 75, histidine 81, and aspartate 88 together coordinate substrate. The active-site Proton donor is the histidine 101. Substrate is bound by residues 102 to 103 (LS) and arginine 112.

Belongs to the type-II 3-dehydroquinase family. As to quaternary structure, homododecamer.

It catalyses the reaction 3-dehydroquinate = 3-dehydroshikimate + H2O. It functions in the pathway metabolic intermediate biosynthesis; chorismate biosynthesis; chorismate from D-erythrose 4-phosphate and phosphoenolpyruvate: step 3/7. In terms of biological role, catalyzes a trans-dehydration via an enolate intermediate. The polypeptide is 3-dehydroquinate dehydratase (Brucella abortus (strain S19)).